Reading from the N-terminus, the 180-residue chain is Ribulose bisphosphate carboxylase small subunit, chloroplastic 5 (180 aa).

Residues 1–56 (MASSVMSSAAVATRGNGAQASMVAPFTGLKSTASFPVSRKQNLDITSIASNGGRVR) constitute a chloroplast transit peptide.

The protein belongs to the RuBisCO small chain family. As to quaternary structure, heterohexadecamer of 8 large and 8 small subunits.

Its subcellular location is the plastid. It is found in the chloroplast. Functionally, ruBisCO catalyzes two reactions: the carboxylation of D-ribulose 1,5-bisphosphate, the primary event in carbon dioxide fixation, as well as the oxidative fragmentation of the pentose substrate. Both reactions occur simultaneously and in competition at the same active site. Although the small subunit is not catalytic it is essential for maximal activity. The polypeptide is Ribulose bisphosphate carboxylase small subunit, chloroplastic 5 (Solanum tuberosum (Potato)).